Consider the following 71-residue polypeptide: Small ribosomal subunit protein bS21 (71 aa).

Belongs to the bacterial ribosomal protein bS21 family.

The protein is Small ribosomal subunit protein bS21 of Ruthia magnifica subsp. Calyptogena magnifica.